The chain runs to 67 residues: Bowman-Birk type proteinase inhibitor 1 (67 aa).

7 disulfide bridges follow: cysteine 5–cysteine 59, cysteine 6–cysteine 21, cysteine 9–cysteine 55, cysteine 11–cysteine 19, cysteine 29–cysteine 36, cysteine 33–cysteine 48, and cysteine 38–cysteine 46.

This sequence belongs to the Bowman-Birk serine protease inhibitor family. In terms of assembly, monomer. Although dimerization may occur in solution. Seed.

Its function is as follows. Inhibits trypsin but not chymotrypsin. The inhibitor consists of 2 domains and has 2 sites of interaction with trypsin. The protein is Bowman-Birk type proteinase inhibitor 1 of Dioclea glabra.